A 109-amino-acid chain; its full sequence is Large ribosomal subunit protein uL22 (109 aa).

The protein belongs to the universal ribosomal protein uL22 family. Part of the 50S ribosomal subunit.

In terms of biological role, this protein binds specifically to 23S rRNA; its binding is stimulated by other ribosomal proteins, e.g. L4, L17, and L20. It is important during the early stages of 50S assembly. It makes multiple contacts with different domains of the 23S rRNA in the assembled 50S subunit and ribosome. The globular domain of the protein is located near the polypeptide exit tunnel on the outside of the subunit, while an extended beta-hairpin is found that lines the wall of the exit tunnel in the center of the 70S ribosome. In Neisseria gonorrhoeae (strain ATCC 700825 / FA 1090), this protein is Large ribosomal subunit protein uL22.